The sequence spans 933 residues: Phospholipase SGR2 (933 aa).

Basic and acidic residues predominate over residues 1 to 14 (MEDRETHLGTREVN). Residues 1-22 (MEDRETHLGTREVNETSPDLLK) are disordered. S444 is a catalytic residue. Disordered regions lie at residues 475-517 (PDEE…GQDN) and 553-598 (RGGQ…ESVN). Residues 505–517 (QLNNPEKITGQDN) show a composition bias toward polar residues. Residues 553 to 563 (RGGQEDDHHDS) are compositionally biased toward basic and acidic residues. The stretch at 593-631 (DKESVNSNNEERIKLLQDEVNSLRSKVAQLLSENARILS) forms a coiled coil. The DDHD domain maps to 669–868 (LEFKVDTFFA…ALFIIKHLYR (200 aa)). Residues 871-903 (PDGPNSPTESTEGDDSPKDSSRPHSWIDRREAD) are disordered. A compositionally biased stretch (basic and acidic residues) spans 885–902 (DSPKDSSRPHSWIDRREA).

Forms oligomers. Expressed in roots, hypocotyls, leaves, stems and floral buds, and, at low levels, in siliques.

The protein resides in the vacuole membrane. Functionally, involved in vacuolar formation or function (e.g. formation of vacuolar membrane 'bulbs'). Required for amyloplast sedimentation in the endodermis during shoot gravitropism, which are thus acting as statoliths. Particularly important for the negative gravitropism leading to leaf movement observed in darkness. This chain is Phospholipase SGR2 (SGR2), found in Arabidopsis thaliana (Mouse-ear cress).